Reading from the N-terminus, the 120-residue chain is UPF0145 protein UNCMA_30400 (120 aa).

The protein belongs to the UPF0145 family.

This Methanocella arvoryzae (strain DSM 22066 / NBRC 105507 / MRE50) protein is UPF0145 protein UNCMA_30400.